The primary structure comprises 216 residues: Large ribosomal subunit protein uL3 (216 aa).

Disordered stretches follow at residues 89 to 108 and 139 to 158; these read QRAS…VGGF and NTHG…QCQS. The residue at position 157 (glutamine 157) is an N5-methylglutamine.

The protein belongs to the universal ribosomal protein uL3 family. As to quaternary structure, part of the 50S ribosomal subunit. Forms a cluster with proteins L14 and L19. In terms of processing, methylated by PrmB.

Functionally, one of the primary rRNA binding proteins, it binds directly near the 3'-end of the 23S rRNA, where it nucleates assembly of the 50S subunit. The polypeptide is Large ribosomal subunit protein uL3 (Halorhodospira halophila (strain DSM 244 / SL1) (Ectothiorhodospira halophila (strain DSM 244 / SL1))).